The sequence spans 1283 residues: uncharacterized protein (1283 aa).

The region spanning 10-46 (ACPPNTFTCADGSCIPSDWKGDGEKDCEDGSDEEAVT) is the LDL-receptor class A domain. Intrachain disulfides connect cysteine 11–cysteine 23 and cysteine 18–cysteine 36. The segment at 27–47 (DWKGDGEKDCEDGSDEEAVTG) is disordered. A compositionally biased stretch (acidic residues) spans 34-45 (KDCEDGSDEEAV). Asparagine 79 is a glycosylation site (N-linked (GlcNAc...) asparagine). Positions 236–278 (STTLIVDETTESTSASAEDDDDDVLTTNTSEESTATTAHDEEV) are disordered. The span at 261 to 272 (TTNTSEESTATT) shows a compositional bias: low complexity. The stretch at 332–389 (YQKTLEKEKCAIRNATSKCEALISYNNNLDCAIVTMNDECEVDAQNLVVELQEEVNDL) forms a coiled coil. 2 disordered regions span residues 621 to 651 (ARPT…VASS) and 1005 to 1046 (SSST…PTDG). The span at 626–647 (VTMPPRAPTAKPLPIPSAPTPP) shows a compositional bias: pro residues. A compositionally biased stretch (low complexity) spans 1005–1015 (SSSTMVSTSSE). The span at 1016–1026 (SDSESAPEQET) shows a compositional bias: acidic residues. Residues 1027–1044 (EPTVPSTTETTESPSTPT) show a composition bias toward low complexity. The helical transmembrane segment at 1263–1283 (VQSSVSFHIILAALIPFFALF) threads the bilayer.

It localises to the membrane. This is an uncharacterized protein from Caenorhabditis elegans.